A 219-amino-acid polypeptide reads, in one-letter code: Ribose-5-phosphate isomerase A (219 aa).

Residues 28 to 31 (SGST), 81 to 84 (DGAD), and 94 to 97 (KGGG) each bind substrate. E103 acts as the Proton acceptor in catalysis. Residue K121 coordinates substrate.

It belongs to the ribose 5-phosphate isomerase family. Homodimer.

It carries out the reaction aldehydo-D-ribose 5-phosphate = D-ribulose 5-phosphate. It functions in the pathway carbohydrate degradation; pentose phosphate pathway; D-ribose 5-phosphate from D-ribulose 5-phosphate (non-oxidative stage): step 1/1. Functionally, catalyzes the reversible conversion of ribose-5-phosphate to ribulose 5-phosphate. This chain is Ribose-5-phosphate isomerase A, found in Histophilus somni (strain 129Pt) (Haemophilus somnus).